We begin with the raw amino-acid sequence, 169 residues long: Translationally-controlled tumor protein homolog (169 aa).

One can recognise a TCTP domain in the interval 1–169 (MLIYKDILTG…WKHGLEEMKV (169 aa)).

Belongs to the TCTP family.

The protein resides in the cytoplasm. Its subcellular location is the cytoskeleton. In terms of biological role, involved in protein synthesis. Involved in microtubule stabilization. This is Translationally-controlled tumor protein homolog from Alternaria alternata (Alternaria rot fungus).